Reading from the N-terminus, the 195-residue chain is MTVRKQKRFGLDIDGTVTDPATFLPYLNEQFQKTLTLEDITDYDLTKSLGITSEEFWKWMEQHEQTIYKQAKKADGVDQVLEEWKQEHELIYITARASHLEEITKNWFEQQNLPFHHIELVGKHDKIEAIRTHEIDIFFEDKHDNAVAIAETFAIPVILMDTPYNRLPTPANVVRINHWTEAKAWVDEWLKRSGF.

The protein belongs to the 5'(3')-deoxyribonucleotidase family.

In Halalkalibacterium halodurans (strain ATCC BAA-125 / DSM 18197 / FERM 7344 / JCM 9153 / C-125) (Bacillus halodurans), this protein is Putative nucleotidase BH1399.